The following is a 179-amino-acid chain: Transthyretin-like protein 46 (179 aa).

Residues methionine 1–alanine 17 form the signal peptide. Positions arginine 144–phenylalanine 179 are disordered. Residues asparagine 157 to phenylalanine 179 are compositionally biased toward basic and acidic residues.

The protein belongs to the nematode transthyretin-like family.

Its subcellular location is the secreted. The protein is Transthyretin-like protein 46 (ttr-46) of Caenorhabditis elegans.